Reading from the N-terminus, the 239-residue chain is MATPHINAEMGDFADVVLMPGDPLRAKHIAETFLEDVREVNNVRGMLGFTGTYKGRKISVMGHGMGIPSCSIYTKELITDFGVKKIIRVGSCGAVRMDVKLRDVVIGMGACTDSKVNRIRFKDHDFAAIADFDMVRNAVDAAKALGVDARVGNLFSADLFYSPDGEMFDVMEKYGVLGVEMEAAGIYGVAAEFGAKALTICTVSDHIRTHEQTTAAERQTTFNDMIKIALESVLLGDQE.

H5 lines the a purine D-ribonucleoside pocket. Phosphate-binding positions include G21, R25, R44, and 88–91 (RVGS). A purine D-ribonucleoside contacts are provided by residues 180 to 182 (EME) and 204 to 205 (SD). D205 functions as the Proton donor in the catalytic mechanism.

The protein belongs to the PNP/UDP phosphorylase family. As to quaternary structure, homohexamer; trimer of homodimers.

It carries out the reaction a purine D-ribonucleoside + phosphate = a purine nucleobase + alpha-D-ribose 1-phosphate. The enzyme catalyses a purine 2'-deoxy-D-ribonucleoside + phosphate = a purine nucleobase + 2-deoxy-alpha-D-ribose 1-phosphate. Its function is as follows. Catalyzes the reversible phosphorolytic breakdown of the N-glycosidic bond in the beta-(deoxy)ribonucleoside molecules, with the formation of the corresponding free purine bases and pentose-1-phosphate. The chain is Purine nucleoside phosphorylase DeoD-type from Salmonella choleraesuis (strain SC-B67).